A 97-amino-acid chain; its full sequence is SAGA-associated factor 11 (97 aa).

Residues 70 to 91 (IECNVCGREVSGNRFAAHLVRC) form an SGF11-type zinc finger.

This sequence belongs to the SGF11 family. As to quaternary structure, component of the 1.8 MDa SAGA transcription coactivator-HAT complex. SAGA is built of 5 distinct domains with specialized functions. Within the SAGA complex, SUS1, SGF11, SGF73 and UBP8 form an additional subcomplex of SAGA called the DUB module (deubiquitination module). Interacts directly with SGF73, SUS1 and UBP8.

Its subcellular location is the nucleus. Functionally, functions as a component of the transcription regulatory histone acetylation (HAT) complex SAGA. At the promoters, SAGA is required for recruitment of the basal transcription machinery. It influences RNA polymerase II transcriptional activity through different activities such as TBP interaction and promoter selectivity, interaction with transcription activators, and chromatin modification through histone acetylation and deubiquitination. SAGA acetylates nucleosomal histone H3 to some extent (to form H3K9ac, H3K14ac, H3K18ac and H3K23ac). SAGA interacts with DNA via upstream activating sequences (UASs). Involved in transcriptional regulation of a subset of SAGA-regulated genes. Within the SAGA complex, participates in a subcomplex, that specifically deubiquitinates histones H2B. This chain is SAGA-associated factor 11, found in Kluyveromyces lactis (strain ATCC 8585 / CBS 2359 / DSM 70799 / NBRC 1267 / NRRL Y-1140 / WM37) (Yeast).